We begin with the raw amino-acid sequence, 329 residues long: Type 2 lactosamine alpha-2,3-sialyltransferase (329 aa).

Residues 1 to 4 (MKGY) lie on the Cytoplasmic side of the membrane. A helical; Signal-anchor for type II membrane protein transmembrane segment spans residues 5 to 25 (LVAIFLSSIFLYYVLYCILWG). Residues 26-329 (TNGYWFPAEE…IKKKMVINLT (304 aa)) are Lumenal-facing. Residues Asn-129, Asn-181, Asn-295, and Asn-308 are each glycosylated (N-linked (GlcNAc...) asparagine).

This sequence belongs to the glycosyltransferase 29 family.

It localises to the golgi apparatus membrane. The enzyme catalyses a neolactoside nLc4Cer(d18:1(4E)) + CMP-N-acetyl-beta-neuraminate = a neolactoside IV(3)-alpha-NeuAc-nLc4Cer(d18:1(4E)) + CMP + H(+). The catalysed reaction is a beta-D-galactosyl-(1-&gt;4)-N-acetyl-beta-D-glucosaminyl derivative + CMP-N-acetyl-beta-neuraminate = an N-acetyl-alpha-neuraminyl-(2-&gt;3)-beta-D-galactosyl-(1-&gt;4)-N-acetyl-beta-D-glucosaminyl derivative + CMP + H(+). It carries out the reaction a neolactoside nLc6Cer(d18:1(4E)) + CMP-N-acetyl-beta-neuraminate = a neolactoside VI(3)-alpha-NeuNAc-nLc6Cer(d18:1(4E)) + CMP + H(+). Functionally, transfers the sialyl residue from CMP-N-acetyl-beta-neuraminate to the terminal galactose residue on sugar chains of glycoproteins and glycolipids. It's alpha-2,3-sialyltransferase activity is specific toward type II glycan chains (Galbeta1-4GlcNAc) on glycoproteins and glycolipids such as neolactosides nLc4Cer and nLc6Cer, whose sialyl-products serve as precursors for the Lewis X antigen. Critically involved in the synthesis of functional selectin ligands needed for neutrophil recruitment during inflammation and lymphocyte homing to the lymph nodes. The polypeptide is Type 2 lactosamine alpha-2,3-sialyltransferase (St3gal6) (Mus musculus (Mouse)).